A 246-amino-acid chain; its full sequence is Nuclear transcription factor Y subunit C-2 (246 aa).

2 disordered regions span residues 1-35 (MDNQ…AVPH) and 205-246 (QQGA…PSSE). Positions 9–21 (AGQPAAAGAGAPV) are enriched in low complexity.

It belongs to the NFYC/HAP5 subunit family. In terms of assembly, heterotrimeric transcription factor composed of three components, NF-YA, NF-YB and NF-YC. NF-YB and NF-YC must interact and dimerize for NF-YA association and DNA binding. Interacts with NFYB8, NFYB10 and HD5/NFYB11.

The protein resides in the nucleus. It localises to the cytoplasm. Its function is as follows. Probable transcription factor involved in the regulation of flowering time under long day (LD) conditions. Functions as a repressor of flowering, independently of HD1 and GHD7. Controls flowering time by negatively regulating the expression of EHD1 and HD3A. Component of the NF-Y/HAP transcription factor complex. This chain is Nuclear transcription factor Y subunit C-2, found in Oryza sativa subsp. japonica (Rice).